The chain runs to 146 residues: Hemoglobin subunit beta (146 aa).

Residues 2–146 (HWSAEEKQLI…VAHALARKYH (145 aa)) enclose the Globin domain. 2 residues coordinate heme b: His63 and His92.

It belongs to the globin family. As to quaternary structure, heterotetramer of two alpha chains and two beta chains. As to expression, red blood cells.

In terms of biological role, involved in oxygen transport from the lung to the various peripheral tissues. This Psittacula krameri (Rose-ringed parakeet) protein is Hemoglobin subunit beta (HBB).